We begin with the raw amino-acid sequence, 195 residues long: Thymidylate kinase (195 aa).

Residue 7–14 participates in ATP binding; the sequence is GIDGVGKS.

It belongs to the thymidylate kinase family.

It catalyses the reaction dTMP + ATP = dTDP + ADP. Phosphorylation of dTMP to form dTDP in both de novo and salvage pathways of dTTP synthesis. In Campylobacter hominis (strain ATCC BAA-381 / DSM 21671 / CCUG 45161 / LMG 19568 / NCTC 13146 / CH001A), this protein is Thymidylate kinase.